We begin with the raw amino-acid sequence, 240 residues long: Transposase for insertion sequence element IS3411 (240 aa).

The Integrase catalytic domain maps to 125-240 (VAERPDQLWV…RASMVFTKRR (116 aa)).

Functionally, involved in the transposition of the insertion sequence. The polypeptide is Transposase for insertion sequence element IS3411 (Escherichia coli).